The sequence spans 142 residues: Small ribosomal subunit protein uS9 (142 aa).

The protein belongs to the universal ribosomal protein uS9 family.

The protein resides in the cytoplasm. This chain is Small ribosomal subunit protein uS9 (RPS16), found in Syntrichia ruralis (Great hairy screw-moss).